A 297-amino-acid polypeptide reads, in one-letter code: Probable endonuclease 4 (297 aa).

9 residues coordinate Zn(2+): His-69, His-110, Glu-145, Asp-179, His-182, His-214, Asp-227, His-229, and Glu-259.

This sequence belongs to the AP endonuclease 2 family. The cofactor is Zn(2+).

The enzyme catalyses Endonucleolytic cleavage to 5'-phosphooligonucleotide end-products.. In terms of biological role, endonuclease IV plays a role in DNA repair. It cleaves phosphodiester bonds at apurinic or apyrimidinic (AP) sites, generating a 3'-hydroxyl group and a 5'-terminal sugar phosphate. The protein is Probable endonuclease 4 of Bacillus subtilis (strain 168).